The following is a 102-amino-acid chain: Large ribosomal subunit protein mL63 (102 aa).

The protein belongs to the mitochondrion-specific ribosomal protein mL63 family. Component of the mitochondrial large ribosomal subunit (mt-LSU). Mature mammalian 55S mitochondrial ribosomes consist of a small (28S) and a large (39S) subunit. The 28S small subunit contains a 12S ribosomal RNA (12S mt-rRNA) and 30 different proteins. The 39S large subunit contains a 16S rRNA (16S mt-rRNA), a copy of mitochondrial valine transfer RNA (mt-tRNA(Val)), which plays an integral structural role, and 52 different proteins.

Its subcellular location is the mitochondrion. The protein is Large ribosomal subunit protein mL63 (MRPL57) of Homo sapiens (Human).